The primary structure comprises 400 residues: Formate-dependent phosphoribosylglycinamide formyltransferase (400 aa).

N(1)-(5-phospho-beta-D-ribosyl)glycinamide is bound by residues 22–23 (EL) and E82. Residues R115, K156, 161-166 (SSGKGQ), 196-199 (EGFI), and E204 each bind ATP. The 190-residue stretch at 120 to 309 (RLAAETLGLP…EFALHARAIL (190 aa)) folds into the ATP-grasp domain. Residues E268 and E280 each coordinate Mg(2+). N(1)-(5-phospho-beta-D-ribosyl)glycinamide is bound by residues D287, K361, and 368-369 (RR).

This sequence belongs to the PurK/PurT family. As to quaternary structure, homodimer.

It catalyses the reaction N(1)-(5-phospho-beta-D-ribosyl)glycinamide + formate + ATP = N(2)-formyl-N(1)-(5-phospho-beta-D-ribosyl)glycinamide + ADP + phosphate + H(+). It participates in purine metabolism; IMP biosynthesis via de novo pathway; N(2)-formyl-N(1)-(5-phospho-D-ribosyl)glycinamide from N(1)-(5-phospho-D-ribosyl)glycinamide (formate route): step 1/1. Involved in the de novo purine biosynthesis. Catalyzes the transfer of formate to 5-phospho-ribosyl-glycinamide (GAR), producing 5-phospho-ribosyl-N-formylglycinamide (FGAR). Formate is provided by PurU via hydrolysis of 10-formyl-tetrahydrofolate. The chain is Formate-dependent phosphoribosylglycinamide formyltransferase from Xanthomonas campestris pv. campestris (strain 8004).